A 377-amino-acid chain; its full sequence is 8-amino-7-oxononanoate synthase (377 aa).

Arg-13 serves as a coordination point for substrate. Position 100–101 (100–101) interacts with pyridoxal 5'-phosphate; sequence GY. His-125 contacts substrate. The pyridoxal 5'-phosphate site is built by Ser-171, His-199, and Thr-228. Lys-231 bears the N6-(pyridoxal phosphate)lysine mark. Thr-345 serves as a coordination point for substrate.

Belongs to the class-II pyridoxal-phosphate-dependent aminotransferase family. BioF subfamily. Homodimer. The cofactor is pyridoxal 5'-phosphate.

The catalysed reaction is 6-carboxyhexanoyl-[ACP] + L-alanine + H(+) = (8S)-8-amino-7-oxononanoate + holo-[ACP] + CO2. Its pathway is cofactor biosynthesis; biotin biosynthesis. Its function is as follows. Catalyzes the decarboxylative condensation of pimeloyl-[acyl-carrier protein] and L-alanine to produce 8-amino-7-oxononanoate (AON), [acyl-carrier protein], and carbon dioxide. This Nitrosococcus oceani (strain ATCC 19707 / BCRC 17464 / JCM 30415 / NCIMB 11848 / C-107) protein is 8-amino-7-oxononanoate synthase.